The sequence spans 553 residues: Transcription factor MYB65 (553 aa).

Residues 1-44 (MSYTTATADSDDGMHSSIHNESPAPDSISNGCRSRGKRSVLKKG) are disordered. 2 consecutive HTH myb-type domains span residues 38–90 (RSVL…ANHL) and 91–145 (RPNL…KRRQ). 2 DNA-binding regions (H-T-H motif) span residues 66 to 90 (WNAVQKHTSLARCGKSCRLRWANHL) and 118 to 141 (WAQMAEHLPGRTDNEIKNYWNTRI).

In terms of tissue distribution, mostly expressed in roots (e.g. root tips), stems, pollen, shoot apices, flowers and floral shoot tips, and, to a lower extent, in leaves and siliques.

The protein localises to the nucleus. Transcriptional activator of alpha-amylase expression that binds to 5'-CAACTGTC-3' motif in target gene promoter. In vegetative tissues, inhibits growth by reducing cell proliferation. Promotes the expression of aleurone-related genes (e.g. CP1, CP, GASA1, BXL1 and BXL2) in seeds. Together with MYB33 and MYB101, promotes the programmed cell death (PCD) the vacuolation of protein storage vacuoles (PSVs) in the aleurone layers during seed germination. Together with MYB33, facilitates anther and tapetum development. This Arabidopsis thaliana (Mouse-ear cress) protein is Transcription factor MYB65.